A 459-amino-acid polypeptide reads, in one-letter code: Exodeoxyribonuclease 7 large subunit (459 aa).

It belongs to the XseA family. Heterooligomer composed of large and small subunits.

The protein localises to the cytoplasm. The catalysed reaction is Exonucleolytic cleavage in either 5'- to 3'- or 3'- to 5'-direction to yield nucleoside 5'-phosphates.. Functionally, bidirectionally degrades single-stranded DNA into large acid-insoluble oligonucleotides, which are then degraded further into small acid-soluble oligonucleotides. This chain is Exodeoxyribonuclease 7 large subunit, found in Pseudomonas fluorescens (strain Pf0-1).